The following is a 263-amino-acid chain: L-aspartate dehydrogenase (263 aa).

Residues Ala120 and Asn186 each contribute to the NAD(+) site. His216 is a catalytic residue.

This sequence belongs to the L-aspartate dehydrogenase family.

It catalyses the reaction L-aspartate + NADP(+) + H2O = oxaloacetate + NH4(+) + NADPH + H(+). It carries out the reaction L-aspartate + NAD(+) + H2O = oxaloacetate + NH4(+) + NADH + H(+). Its pathway is cofactor biosynthesis; NAD(+) biosynthesis; iminoaspartate from L-aspartate (dehydrogenase route): step 1/1. In terms of biological role, specifically catalyzes the NAD or NADP-dependent dehydrogenation of L-aspartate to iminoaspartate. The chain is L-aspartate dehydrogenase from Acinetobacter baylyi (strain ATCC 33305 / BD413 / ADP1).